The primary structure comprises 1397 residues: DNA-directed RNA polymerase subunit beta' (1397 aa).

The Zn(2+) site is built by Cys71, Cys73, Cys86, and Cys89. Mg(2+)-binding residues include Asp462, Asp464, and Asp466. Zn(2+) contacts are provided by Cys811, Cys885, Cys892, and Cys895. Residues 1368–1397 (QNRDDKILEDQGGATPTASTEIKEPAEGAA) form a disordered region. Basic and acidic residues predominate over residues 1388-1397 (EIKEPAEGAA).

It belongs to the RNA polymerase beta' chain family. The RNAP catalytic core consists of 2 alpha, 1 beta, 1 beta' and 1 omega subunit. When a sigma factor is associated with the core the holoenzyme is formed, which can initiate transcription. It depends on Mg(2+) as a cofactor. Zn(2+) serves as cofactor.

It catalyses the reaction RNA(n) + a ribonucleoside 5'-triphosphate = RNA(n+1) + diphosphate. Functionally, DNA-dependent RNA polymerase catalyzes the transcription of DNA into RNA using the four ribonucleoside triphosphates as substrates. The protein is DNA-directed RNA polymerase subunit beta' of Parvibaculum lavamentivorans (strain DS-1 / DSM 13023 / NCIMB 13966).